We begin with the raw amino-acid sequence, 363 residues long: Aminopyrrolnitrin oxygenase PrnD (363 aa).

The 109-residue stretch at 29-137 folds into the Rieske domain; that stretch reads WYVAMRSNEL…TAERYGYVWV (109 aa). [2Fe-2S] cluster contacts are provided by C69, H71, C88, and H91.

Homodimer. Requires [2Fe-2S] cluster as cofactor. Fe cation is required as a cofactor. FMN serves as cofactor.

The enzyme catalyses aminopyrrolnitrin + NADPH + 2 O2 + H(+) = pyrrolnitrin + NADP(+) + 2 H2O. It functions in the pathway antibiotic biosynthesis. Functionally, involved in the biosynthesis of the antifungal antibiotic pyrrolnitrin (PRN). Catalyzes the oxidation of the amino group of aminopyrrolnitrin (APRN) to a nitro group to form PRN. It has high substrate specificity toward physiological substrate aminopyrrolnitrin, p-aminobenzylamine (pABA), p-aminobenzyl alcohol, and p-aminophenyl alanine. The sequence is that of Aminopyrrolnitrin oxygenase PrnD (prnD) from Pseudomonas fluorescens.